The chain runs to 432 residues: Ornithine decarboxylase (432 aa).

At K98 the chain carries N6-(pyridoxal phosphate)lysine. Pyridoxal 5'-phosphate contacts are provided by residues S229, G266, and 296–299 (EPGR). Residue 341 to 342 (FD) participates in substrate binding. The Proton donor; shared with dimeric partner role is filled by C377. D378 serves as a coordination point for substrate. Pyridoxal 5'-phosphate is bound at residue Y407.

This sequence belongs to the Orn/Lys/Arg decarboxylase class-II family. In terms of assembly, homodimer. Only the dimer is catalytically active, as the active sites are constructed of residues from both monomers. Requires pyridoxal 5'-phosphate as cofactor.

Its subcellular location is the cytoplasm. It carries out the reaction L-ornithine + H(+) = putrescine + CO2. It participates in amine and polyamine biosynthesis; putrescine biosynthesis via L-ornithine pathway; putrescine from L-ornithine: step 1/1. Its activity is regulated as follows. Inhibited by antizyme (AZ) OAZ1 in response to polyamine levels. AZ inhibits the assembly of the functional homodimer by binding to ODC monomers and targeting them for ubiquitin-independent proteolytic destruction by the 26S proteasome. Its function is as follows. Catalyzes the first and rate-limiting step of polyamine biosynthesis that converts ornithine into putrescine, which is the precursor for the polyamines, spermidine and spermine. Polyamines are essential for cell proliferation and are implicated in cellular processes, ranging from DNA replication to apoptosis. This Schizosaccharomyces pombe (strain 972 / ATCC 24843) (Fission yeast) protein is Ornithine decarboxylase (spe1).